We begin with the raw amino-acid sequence, 252 residues long: MERLLIVNADDFGLSKGQNYGIIEACRNGIVTSTTALVNGQAIDHAVQLSRDEPSLAIGMHFVLTMGKPLTAMPGLTRDGVLGKWIWQLAEEDALPLEEITQELASQYLRFIELFGRKPTHLDSHHHVHMFPQIFPIVARFAAEEGIALRIDRQPLSNAGDLPANLRSSQGFSSAFYGEEISEALFLQVLDDASHRGDRSLEVMCHPAFIDNTIRQSAYCFPRLTELEVLTSASLKYAIAERGYRLGSYLNV.

Positions 61 and 125 each coordinate Mg(2+).

Belongs to the YdjC deacetylase family. ChbG subfamily. In terms of assembly, homodimer. Mg(2+) serves as cofactor.

The protein resides in the cytoplasm. The enzyme catalyses N,N'-diacetylchitobiose + H2O = N-acetyl-beta-D-glucosaminyl-(1-&gt;4)-D-glucosamine + acetate. It catalyses the reaction diacetylchitobiose-6'-phosphate + H2O = N'-monoacetylchitobiose-6'-phosphate + acetate. Its pathway is glycan degradation; chitin degradation. In terms of biological role, involved in the degradation of chitin. ChbG is essential for growth on the acetylated chitooligosaccharides chitobiose and chitotriose but is dispensable for growth on cellobiose and chitosan dimer, the deacetylated form of chitobiose. Deacetylation of chitobiose-6-P and chitotriose-6-P is necessary for both the activation of the chb promoter by the regulatory protein ChbR and the hydrolysis of phosphorylated beta-glucosides by the phospho-beta-glucosidase ChbF. Catalyzes the removal of only one acetyl group from chitobiose-6-P to yield monoacetylchitobiose-6-P, the inducer of ChbR and the substrate of ChbF. The sequence is that of Chitooligosaccharide deacetylase from Escherichia coli O139:H28 (strain E24377A / ETEC).